Consider the following 165-residue polypeptide: PARP-type zinc finger-containing protein C13F5.07c (165 aa).

The segment at 8–100 (YRIEIAPNNR…KVVDAINEGH (93 aa)) adopts a PARP-type; degenerate zinc-finger fold. The span at 100-114 (HVSESDERESRKLGE) shows a compositional bias: basic and acidic residues. The tract at residues 100-165 (HVSESDERES…TDGSEAYEDD (66 aa)) is disordered. The span at 117 to 128 (NVNSQKLKTSSP) shows a compositional bias: polar residues. Positions 131 to 141 (VVRKNKRHHTT) are enriched in basic residues. A compositionally biased stretch (acidic residues) spans 149–165 (SDLDAEFTDGSEAYEDD).

It localises to the cytoplasm. Its subcellular location is the nucleus. This is PARP-type zinc finger-containing protein C13F5.07c from Schizosaccharomyces pombe (strain 972 / ATCC 24843) (Fission yeast).